A 179-amino-acid chain; its full sequence is ATP synthase subunit delta (179 aa).

The protein belongs to the ATPase delta chain family. In terms of assembly, F-type ATPases have 2 components, F(1) - the catalytic core - and F(0) - the membrane proton channel. F(1) has five subunits: alpha(3), beta(3), gamma(1), delta(1), epsilon(1). F(0) has three main subunits: a(1), b(2) and c(10-14). The alpha and beta chains form an alternating ring which encloses part of the gamma chain. F(1) is attached to F(0) by a central stalk formed by the gamma and epsilon chains, while a peripheral stalk is formed by the delta and b chains.

The protein localises to the cell membrane. In terms of biological role, f(1)F(0) ATP synthase produces ATP from ADP in the presence of a proton or sodium gradient. F-type ATPases consist of two structural domains, F(1) containing the extramembraneous catalytic core and F(0) containing the membrane proton channel, linked together by a central stalk and a peripheral stalk. During catalysis, ATP synthesis in the catalytic domain of F(1) is coupled via a rotary mechanism of the central stalk subunits to proton translocation. Functionally, this protein is part of the stalk that links CF(0) to CF(1). It either transmits conformational changes from CF(0) to CF(1) or is implicated in proton conduction. The polypeptide is ATP synthase subunit delta (Ureaplasma parvum serovar 3 (strain ATCC 27815 / 27 / NCTC 11736)).